Here is a 344-residue protein sequence, read N- to C-terminus: Heat-inducible transcription repressor HrcA (344 aa).

This sequence belongs to the HrcA family.

In terms of biological role, negative regulator of class I heat shock genes (grpE-dnaK-dnaJ and groELS operons). Prevents heat-shock induction of these operons. This chain is Heat-inducible transcription repressor HrcA, found in Streptococcus equi subsp. zooepidemicus (strain H70).